A 131-amino-acid polypeptide reads, in one-letter code: Small ribosomal subunit protein uS19 (131 aa).

It belongs to the universal ribosomal protein uS19 family.

Functionally, protein S19 forms a complex with S13 that binds strongly to the 16S ribosomal RNA. The polypeptide is Small ribosomal subunit protein uS19 (Nitrosopumilus maritimus (strain SCM1)).